Here is a 346-residue protein sequence, read N- to C-terminus: Phosphate acyltransferase (346 aa).

It belongs to the PlsX family. In terms of assembly, homodimer. Probably interacts with PlsY.

It localises to the cytoplasm. It carries out the reaction a fatty acyl-[ACP] + phosphate = an acyl phosphate + holo-[ACP]. It functions in the pathway lipid metabolism; phospholipid metabolism. In terms of biological role, catalyzes the reversible formation of acyl-phosphate (acyl-PO(4)) from acyl-[acyl-carrier-protein] (acyl-ACP). This enzyme utilizes acyl-ACP as fatty acyl donor, but not acyl-CoA. The polypeptide is Phosphate acyltransferase (Brucella abortus (strain S19)).